A 261-amino-acid polypeptide reads, in one-letter code: Cytochrome c oxidase subunit 3 (261 aa).

At 1-15 (MTHQTHAYHMVNPSP) the chain is on the mitochondrial matrix side. The helical transmembrane segment at 16 to 34 (WPLTGALSALLMTSGLIMW) threads the bilayer. Residues 35–40 (FHFNSM) lie on the Mitochondrial intermembrane side of the membrane. A helical transmembrane segment spans residues 41–66 (TLLMLGLTTNMLTMYQWWRDIIREST). Topologically, residues 67–72 (FQGHHT) are mitochondrial matrix. Residues 73 to 105 (SAVQKGLRYGMILFIISEVLFFTGFFWAFYHSS) traverse the membrane as a helical segment. Over 106–128 (LAPTPELGGCWPPTGIHPLNPLE) the chain is Mitochondrial intermembrane. Residues 129 to 152 (VPLLNTSVLLASGVSITWAHHSLM) form a helical membrane-spanning segment. The Mitochondrial matrix segment spans residues 153-155 (EGN). Residues 156 to 183 (RNHMLQALFITIALGVYFTLLQASEYYE) form a helical membrane-spanning segment. Residues 184–190 (APFTISD) lie on the Mitochondrial intermembrane side of the membrane. Residues 191–223 (GVYGSTFFVATGFHGLHVIIGSTFLIVCFFRQL) traverse the membrane as a helical segment. Residues 224 to 232 (KFHFTSTHH) lie on the Mitochondrial matrix side of the membrane. Residues 233–256 (FGFEAAAWYWHFVDVVWLFLYVSI) form a helical membrane-spanning segment. Residues 257–261 (YWWGS) lie on the Mitochondrial intermembrane side of the membrane.

It belongs to the cytochrome c oxidase subunit 3 family. In terms of assembly, component of the cytochrome c oxidase (complex IV, CIV), a multisubunit enzyme composed of 14 subunits. The complex is composed of a catalytic core of 3 subunits MT-CO1, MT-CO2 and MT-CO3, encoded in the mitochondrial DNA, and 11 supernumerary subunits COX4I, COX5A, COX5B, COX6A, COX6B, COX6C, COX7A, COX7B, COX7C, COX8 and NDUFA4, which are encoded in the nuclear genome. The complex exists as a monomer or a dimer and forms supercomplexes (SCs) in the inner mitochondrial membrane with NADH-ubiquinone oxidoreductase (complex I, CI) and ubiquinol-cytochrome c oxidoreductase (cytochrome b-c1 complex, complex III, CIII), resulting in different assemblies (supercomplex SCI(1)III(2)IV(1) and megacomplex MCI(2)III(2)IV(2)).

It is found in the mitochondrion inner membrane. It catalyses the reaction 4 Fe(II)-[cytochrome c] + O2 + 8 H(+)(in) = 4 Fe(III)-[cytochrome c] + 2 H2O + 4 H(+)(out). In terms of biological role, component of the cytochrome c oxidase, the last enzyme in the mitochondrial electron transport chain which drives oxidative phosphorylation. The respiratory chain contains 3 multisubunit complexes succinate dehydrogenase (complex II, CII), ubiquinol-cytochrome c oxidoreductase (cytochrome b-c1 complex, complex III, CIII) and cytochrome c oxidase (complex IV, CIV), that cooperate to transfer electrons derived from NADH and succinate to molecular oxygen, creating an electrochemical gradient over the inner membrane that drives transmembrane transport and the ATP synthase. Cytochrome c oxidase is the component of the respiratory chain that catalyzes the reduction of oxygen to water. Electrons originating from reduced cytochrome c in the intermembrane space (IMS) are transferred via the dinuclear copper A center (CU(A)) of subunit 2 and heme A of subunit 1 to the active site in subunit 1, a binuclear center (BNC) formed by heme A3 and copper B (CU(B)). The BNC reduces molecular oxygen to 2 water molecules using 4 electrons from cytochrome c in the IMS and 4 protons from the mitochondrial matrix. In Damaliscus lunatus (Tsessebe), this protein is Cytochrome c oxidase subunit 3 (MT-CO3).